The chain runs to 250 residues: tRNA (guanine-N(1)-)-methyltransferase (250 aa).

Residues glycine 115 and 135–140 each bind S-adenosyl-L-methionine; that span reads LGDFVL.

Belongs to the RNA methyltransferase TrmD family. As to quaternary structure, homodimer.

It localises to the cytoplasm. The catalysed reaction is guanosine(37) in tRNA + S-adenosyl-L-methionine = N(1)-methylguanosine(37) in tRNA + S-adenosyl-L-homocysteine + H(+). In terms of biological role, specifically methylates guanosine-37 in various tRNAs. The chain is tRNA (guanine-N(1)-)-methyltransferase from Legionella pneumophila (strain Lens).